The following is a 267-amino-acid chain: Ribosomal RNA small subunit methyltransferase A (267 aa).

S-adenosyl-L-methionine is bound by residues Asn12, Ile14, Gly39, Glu60, Asp84, and Asn110.

Belongs to the class I-like SAM-binding methyltransferase superfamily. rRNA adenine N(6)-methyltransferase family. RsmA subfamily.

The protein localises to the cytoplasm. The enzyme catalyses adenosine(1518)/adenosine(1519) in 16S rRNA + 4 S-adenosyl-L-methionine = N(6)-dimethyladenosine(1518)/N(6)-dimethyladenosine(1519) in 16S rRNA + 4 S-adenosyl-L-homocysteine + 4 H(+). In terms of biological role, specifically dimethylates two adjacent adenosines (A1518 and A1519) in the loop of a conserved hairpin near the 3'-end of 16S rRNA in the 30S particle. May play a critical role in biogenesis of 30S subunits. In Mesoplasma florum (strain ATCC 33453 / NBRC 100688 / NCTC 11704 / L1) (Acholeplasma florum), this protein is Ribosomal RNA small subunit methyltransferase A.